Reading from the N-terminus, the 424-residue chain is L-rhamnose isomerase (424 aa).

Positions 261, 293, and 295 each coordinate Mn(2+).

The protein belongs to the rhamnose isomerase family. Mn(2+) serves as cofactor.

The protein resides in the cytoplasm. The catalysed reaction is L-rhamnopyranose = L-rhamnulose. The protein operates within carbohydrate degradation; L-rhamnose degradation; glycerone phosphate from L-rhamnose: step 1/3. Functionally, catalyzes the interconversion of L-rhamnose and L-rhamnulose. This chain is L-rhamnose isomerase, found in Bacillus subtilis (strain 168).